A 379-amino-acid polypeptide reads, in one-letter code: tRNA(Met) cytidine acetate ligase (379 aa).

Residues 8 to 21 (IAEF…HEYL), glycine 97, asparagine 153, and arginine 176 contribute to the ATP site.

Belongs to the TmcAL family.

The protein resides in the cytoplasm. It catalyses the reaction cytidine(34) in elongator tRNA(Met) + acetate + ATP = N(4)-acetylcytidine(34) in elongator tRNA(Met) + AMP + diphosphate. In terms of biological role, catalyzes the formation of N(4)-acetylcytidine (ac(4)C) at the wobble position of elongator tRNA(Met), using acetate and ATP as substrates. First activates an acetate ion to form acetyladenylate (Ac-AMP) and then transfers the acetyl group to tRNA to form ac(4)C34. The protein is tRNA(Met) cytidine acetate ligase of Lactococcus lactis subsp. cremoris (strain MG1363).